A 224-amino-acid chain; its full sequence is uncharacterized protein (224 aa).

Residues 108-137 (QLALDRAELNESIRATNENLALQYSKLQTE) are a coiled coil.

This is an uncharacterized protein from Human picobirnavirus (strain Human/Thailand/Hy005102/-) (PBV).